A 128-amino-acid chain; its full sequence is MAFSFPDHFRFADSHEYAFADDALVRIGISEFAVDQLGDIVFVDLPEEGTAIAKGESFGSVESVKAVEDMYAPVSGEIVHRNNSVLASPEELQNDPHGEGWLLIIRPDNPAQLTELMDSETYSKKISA.

Residues 24–106 enclose the Lipoyl-binding domain; it reads LVRIGISEFA…HGEGWLLIIR (83 aa). Lys-65 is modified (N6-lipoyllysine).

It belongs to the GcvH family. As to quaternary structure, the glycine cleavage system is composed of four proteins: P, T, L and H. (R)-lipoate is required as a cofactor.

Functionally, the glycine cleavage system catalyzes the degradation of glycine. The H protein shuttles the methylamine group of glycine from the P protein to the T protein. This Prochlorococcus marinus (strain NATL1A) protein is Glycine cleavage system H protein.